A 462-amino-acid polypeptide reads, in one-letter code: Glycine--tRNA ligase (462 aa).

Substrate contacts are provided by arginine 101 and glutamate 164. Residues 196 to 198 (RNE), 206 to 211 (FRTREF), 283 to 284 (EL), and 327 to 330 (GVDR) contribute to the ATP site. 211 to 215 (FEQME) contributes to the substrate binding site. A substrate-binding site is contributed by 323-327 (EPSAG).

This sequence belongs to the class-II aminoacyl-tRNA synthetase family. Homodimer.

Its subcellular location is the cytoplasm. It carries out the reaction tRNA(Gly) + glycine + ATP = glycyl-tRNA(Gly) + AMP + diphosphate. In terms of biological role, catalyzes the attachment of glycine to tRNA(Gly). This chain is Glycine--tRNA ligase, found in Thermobifida fusca (strain YX).